Here is a 269-residue protein sequence, read N- to C-terminus: UPF0524 protein C3orf70 homolog A (269 aa).

Disordered regions lie at residues 139 to 203 (VQRP…DSGI) and 215 to 249 (DEDS…QDEC). Positions 141–150 (RPPPPTPNPT) are enriched in pro residues. The span at 151 to 164 (HQPQTAAPQPVPQR) shows a compositional bias: low complexity. Positions 179-191 (QAKEKISAPKMDH) are enriched in basic and acidic residues. A compositionally biased stretch (acidic residues) spans 215–233 (DEDSCVDDDDEEEEDDELS).

It belongs to the UPF0524 family.

Plays a role in neuronal and neurobehavioral development. Required for normal expression of neuronal markers elavl3 and eno2 and neurobehaviors related to circadian rhythm and changes in light-dark conditions. This Danio rerio (Zebrafish) protein is UPF0524 protein C3orf70 homolog A.